Here is a 427-residue protein sequence, read N- to C-terminus: MHSYIVEGGYKIGGQITASGNKNAALPCILAALLTDEEVILENIPNINDVKVVLDILNDIGADIAREGNTLKIKVLNIVKTEIDSSFTDLIRASILLLGPFVSRFGKIDMALPGGDVIGKRRLDTHFYGLCKLGAKLSTKDRRIVLKANKLVGAEMFLDEASVTATENIIMAAVLAEGNTVIMNAACEPHVQDLCNMLNSMGANILGIGSNVLEIKGVKKLSGTVFRIGADFMQVGSLISLAALTGGELEIKKADPQHFRLIRHVYSRLGINFEYDRENVYVRNKQELKVKLDFGGHIPKIDDGPWPAFPTDLMSIIVVTATQVEGTVLVFEKMFESRMFFVDKLIKMGARIVLCDPHRVVVTGKSSLKGNVLSSPDVRAGMSLLIAAFVAEGRSEIQNVYQIERGYEDVVNKLINLGAKIKKVKSQ.

A phosphoenolpyruvate-binding site is contributed by 22 to 23 (KN). A UDP-N-acetyl-alpha-D-glucosamine-binding site is contributed by arginine 92. Catalysis depends on aspartate 116, which acts as the Proton donor. UDP-N-acetyl-alpha-D-glucosamine is bound by residues aspartate 312 and methionine 334.

It belongs to the EPSP synthase family. MurA subfamily.

It is found in the cytoplasm. The enzyme catalyses phosphoenolpyruvate + UDP-N-acetyl-alpha-D-glucosamine = UDP-N-acetyl-3-O-(1-carboxyvinyl)-alpha-D-glucosamine + phosphate. Its pathway is cell wall biogenesis; peptidoglycan biosynthesis. Functionally, cell wall formation. Adds enolpyruvyl to UDP-N-acetylglucosamine. This Borreliella burgdorferi (strain ATCC 35210 / DSM 4680 / CIP 102532 / B31) (Borrelia burgdorferi) protein is UDP-N-acetylglucosamine 1-carboxyvinyltransferase.